The sequence spans 121 residues: Amelogenin (121 aa).

2 disordered regions span residues 1–20 and 32–121; these read LHHQ…HALQ and QPMQ…WPAT. Polar residues predominate over residues 48 to 58; it reads SVTPTQHHQSN. A compositionally biased stretch (low complexity) spans 59-71; sequence LPQPAQQPFQPQV. A compositionally biased stretch (pro residues) spans 85–111; the sequence is PAHPMPPMPQPPLPPMFPMQPLPPLLP.

The protein belongs to the amelogenin family.

It is found in the secreted. Its subcellular location is the extracellular space. The protein localises to the extracellular matrix. Its function is as follows. Plays a role in the biomineralization of teeth. Seems to regulate the formation of crystallites during the secretory stage of tooth enamel development. Thought to play a major role in the structural organization and mineralization of developing enamel. This Ornithorhynchus anatinus (Duckbill platypus) protein is Amelogenin (AMEL).